Here is a 513-residue protein sequence, read N- to C-terminus: MLLIDIASTSLNVGGTSSRLAKVERIAELLRAAAPDPELVAIVVAWLSGELRQRQIGVGWAALRSLPAAAGSPALTVTGTDAAFSEIGAVSGKGSAARRRELITRLFAAATETEQAFLVRLLSGELRQGALAGIMVDAVARAAEVPATAVQRAAMLGGDLPTVAAACLAAGSSGAAGALDSFTLRVGRPIGPMLAQSAGSITVALERHGGATIFEAKLDGARVQIHRTGDEVTVYTRSLDDVTARLPEVVQATLALPVSDLVADGEAIALQPDGRPHRFQVTASRFGRSVNVAAAQAKQPLSVFFFDILHRDGRDLLDAPTTDRLAALDAVVPARHRVDRLTTADAAAATDFLRATLAAGHEGVMAKSPTAPYLAGRRGAGWLKVKPVHTLDLVVLAVEWGSGRRRGKLSNIHLGARDAATGEFVMLGKTFKGMTDAMLDWQTARFTELAVGGTDGYVVALRPEQVVEVAFDGVQASSRYPGGLALRFARVVRYRDDKGPADADTIDTVRALY.

ATP is bound at residue Glu-215. Catalysis depends on Lys-217, which acts as the N6-AMP-lysine intermediate. 6 residues coordinate ATP: Arg-222, Arg-237, Glu-266, Phe-306, Arg-378, and Lys-384.

It belongs to the ATP-dependent DNA ligase family. Requires Mg(2+) as cofactor.

It carries out the reaction ATP + (deoxyribonucleotide)n-3'-hydroxyl + 5'-phospho-(deoxyribonucleotide)m = (deoxyribonucleotide)n+m + AMP + diphosphate.. In terms of biological role, DNA ligase that seals nicks in double-stranded DNA during DNA replication, DNA recombination and DNA repair. The polypeptide is Probable DNA ligase (Mycobacterium marinum (strain ATCC BAA-535 / M)).